Reading from the N-terminus, the 135-residue chain is Nucleoside diphosphate kinase (135 aa).

ATP is bound by residues lysine 11, phenylalanine 59, arginine 87, threonine 93, arginine 104, and asparagine 114. The Pros-phosphohistidine intermediate role is filled by histidine 117.

It belongs to the NDK family. Homotetramer. Requires Mg(2+) as cofactor.

The protein resides in the cytoplasm. It carries out the reaction a 2'-deoxyribonucleoside 5'-diphosphate + ATP = a 2'-deoxyribonucleoside 5'-triphosphate + ADP. The enzyme catalyses a ribonucleoside 5'-diphosphate + ATP = a ribonucleoside 5'-triphosphate + ADP. Major role in the synthesis of nucleoside triphosphates other than ATP. The ATP gamma phosphate is transferred to the NDP beta phosphate via a ping-pong mechanism, using a phosphorylated active-site intermediate. This chain is Nucleoside diphosphate kinase, found in Marinomonas sp. (strain MWYL1).